Reading from the N-terminus, the 142-residue chain is Small ribosomal subunit protein bS18m (142 aa).

Belongs to the bacterial ribosomal protein bS18 family. Component of the mitochondrial small ribosomal subunit (mt-SSU). Mature mammalian 55S mitochondrial ribosomes consist of a small (28S) and a large (39S) subunit. The 28S small subunit contains a 12S ribosomal RNA (12S mt-rRNA) and 30 different proteins. The 39S large subunit contains a 16S rRNA (16S mt-rRNA), a copy of mitochondrial valine transfer RNA (mt-tRNA(Val)), which plays an integral structural role, and 52 different proteins. bS18m has a zinc binding site.

The protein resides in the mitochondrion. This is Small ribosomal subunit protein bS18m (MRPS18C) from Homo sapiens (Human).